Here is a 123-residue protein sequence, read N- to C-terminus: Large ribosomal subunit protein uL14 (123 aa).

It belongs to the universal ribosomal protein uL14 family. As to quaternary structure, part of the 50S ribosomal subunit. Forms a cluster with proteins L3 and L19. In the 70S ribosome, L14 and L19 interact and together make contacts with the 16S rRNA in bridges B5 and B8.

In terms of biological role, binds to 23S rRNA. Forms part of two intersubunit bridges in the 70S ribosome. The protein is Large ribosomal subunit protein uL14 of Photorhabdus laumondii subsp. laumondii (strain DSM 15139 / CIP 105565 / TT01) (Photorhabdus luminescens subsp. laumondii).